A 166-amino-acid polypeptide reads, in one-letter code: uncharacterized protein (166 aa).

This is an uncharacterized protein from Acidianus hospitalis (AFV-1).